We begin with the raw amino-acid sequence, 133 residues long: Ribosome-binding factor A (133 aa).

The protein belongs to the RbfA family. As to quaternary structure, monomer. Binds 30S ribosomal subunits, but not 50S ribosomal subunits or 70S ribosomes.

It is found in the cytoplasm. Its function is as follows. One of several proteins that assist in the late maturation steps of the functional core of the 30S ribosomal subunit. Associates with free 30S ribosomal subunits (but not with 30S subunits that are part of 70S ribosomes or polysomes). Required for efficient processing of 16S rRNA. May interact with the 5'-terminal helix region of 16S rRNA. This chain is Ribosome-binding factor A, found in Bordetella parapertussis (strain 12822 / ATCC BAA-587 / NCTC 13253).